A 214-amino-acid chain; its full sequence is Adenylate kinase (214 aa).

10-15 contacts ATP; the sequence is GAGKGT. The interval 30 to 59 is NMP; it reads STGDIFRANIKNGTELGKKAKTYMDQGALV. AMP contacts are provided by residues threonine 31, arginine 36, 57–59, 85–88, and glutamine 92; these read ALV and GFPR. The tract at residues 126–163 is LID; that stretch reads GRRACLNCGATYHIVFNPTKVEGKCDACGADTVLRDDD. Arginine 127 provides a ligand contact to ATP. Cysteine 130 and cysteine 133 together coordinate Zn(2+). 136-137 lines the ATP pocket; that stretch reads TY. 2 residues coordinate Zn(2+): cysteine 150 and cysteine 153. Positions 160 and 171 each coordinate AMP. Position 199 (lysine 199) interacts with ATP.

This sequence belongs to the adenylate kinase family. In terms of assembly, monomer.

It is found in the cytoplasm. The catalysed reaction is AMP + ATP = 2 ADP. Its pathway is purine metabolism; AMP biosynthesis via salvage pathway; AMP from ADP: step 1/1. In terms of biological role, catalyzes the reversible transfer of the terminal phosphate group between ATP and AMP. Plays an important role in cellular energy homeostasis and in adenine nucleotide metabolism. This Agathobacter rectalis (strain ATCC 33656 / DSM 3377 / JCM 17463 / KCTC 5835 / VPI 0990) (Eubacterium rectale) protein is Adenylate kinase.